Consider the following 439-residue polypeptide: Probable cinnamyl alcohol dehydrogenase 8C (439 aa).

Residue C120 participates in Zn(2+) binding. T122 lines the NADP(+) pocket. Zn(2+) is bound by residues H142, E143, C173, C176, C179, C187, and C239. NADP(+) contacts are provided by residues T243, 264-269, 287-292, T327, G351, and 374-376; these read GLGGLG, STSPGK, and NCV.

The protein belongs to the zinc-containing alcohol dehydrogenase family. Homodimer. It depends on Zn(2+) as a cofactor.

It carries out the reaction (E)-cinnamyl alcohol + NADP(+) = (E)-cinnamaldehyde + NADPH + H(+). The catalysed reaction is (E)-coniferol + NADP(+) = (E)-coniferaldehyde + NADPH + H(+). The enzyme catalyses (E)-sinapyl alcohol + NADP(+) = (E)-sinapaldehyde + NADPH + H(+). It catalyses the reaction (E)-4-coumaroyl alcohol + NADP(+) = (E)-4-coumaraldehyde + NADPH + H(+). It carries out the reaction (E)-caffeyl alcohol + NADP(+) = (E)-caffeyl aldehyde + NADPH + H(+). It participates in aromatic compound metabolism; phenylpropanoid biosynthesis. Involved in lignin biosynthesis. Catalyzes the final step specific for the production of lignin monomers. Catalyzes the NADPH-dependent reduction of coniferaldehyde, 5-hydroxyconiferaldehyde, sinapaldehyde, 4-coumaraldehyde and caffeyl aldehyde to their respective alcohols. The chain is Probable cinnamyl alcohol dehydrogenase 8C from Oryza sativa subsp. japonica (Rice).